The primary structure comprises 273 residues: Shikimate dehydrogenase (NADP(+)) (273 aa).

Residues 14 to 16 (SKS) and Thr-61 contribute to the shikimate site. Lys-65 (proton acceptor) is an active-site residue. Glu-77 is an NADP(+) binding site. Shikimate is bound by residues Asn-86 and Asp-102. NADP(+) contacts are provided by residues 126-130 (GAGGA), 150-155 (NRTYEK), and Met-213. Shikimate is bound at residue Tyr-215. Gly-237 contacts NADP(+).

The protein belongs to the shikimate dehydrogenase family. In terms of assembly, homodimer.

It catalyses the reaction shikimate + NADP(+) = 3-dehydroshikimate + NADPH + H(+). Its pathway is metabolic intermediate biosynthesis; chorismate biosynthesis; chorismate from D-erythrose 4-phosphate and phosphoenolpyruvate: step 4/7. Involved in the biosynthesis of the chorismate, which leads to the biosynthesis of aromatic amino acids. Catalyzes the reversible NADPH linked reduction of 3-dehydroshikimate (DHSA) to yield shikimate (SA). This chain is Shikimate dehydrogenase (NADP(+)), found in Aliivibrio fischeri (strain MJ11) (Vibrio fischeri).